Reading from the N-terminus, the 309-residue chain is Porphobilinogen deaminase (309 aa).

C242 bears the S-(dipyrrolylmethanemethyl)cysteine mark.

The protein belongs to the HMBS family. Monomer. Dipyrromethane is required as a cofactor.

The catalysed reaction is 4 porphobilinogen + H2O = hydroxymethylbilane + 4 NH4(+). Its pathway is porphyrin-containing compound metabolism; protoporphyrin-IX biosynthesis; coproporphyrinogen-III from 5-aminolevulinate: step 2/4. Functionally, tetrapolymerization of the monopyrrole PBG into the hydroxymethylbilane pre-uroporphyrinogen in several discrete steps. This Syntrophobacter fumaroxidans (strain DSM 10017 / MPOB) protein is Porphobilinogen deaminase.